Consider the following 197-residue polypeptide: Small ribosomal subunit protein uS11m (197 aa).

Residues 43 to 52 show a composition bias toward basic and acidic residues; that stretch reads AAKEEVEKAE. Residues 43–66 form a disordered region; that stretch reads AAKEEVEKAETPAPAPSRSSFSIY.

The protein belongs to the universal ribosomal protein uS11 family. As to quaternary structure, component of the mitochondrial ribosome small subunit (28S) which comprises a 12S rRNA and about 30 distinct proteins.

The protein resides in the mitochondrion. This chain is Small ribosomal subunit protein uS11m (MRPS11), found in Bos taurus (Bovine).